Reading from the N-terminus, the 678-residue chain is Protein hook (678 aa).

Residues 1–155 (MSTQNGMYYS…NIMRALQELE (155 aa)) are interaction with microtubules. Residues 5–123 (NGMYYSLLEW…RLLQLVLGCA (119 aa)) form the Calponin-homology (CH) domain. 2 coiled-coil regions span residues 135–435 (EIMC…LKCG) and 479–589 (QTAL…AKEV).

The protein belongs to the hook family. In terms of assembly, homodimer. Interacts with microtubules via its N-terminus.

It localises to the cytoplasm. It is found in the cytoskeleton. Its subcellular location is the endosome. The protein localises to the synapse. Its function is as follows. Involved in endocytic trafficking by stabilizing organelles of the endocytic pathway. Probably acts as a cytoskeletal linker protein required to tether endosome vesicles to the cytoskeleton. Involved in modulation of endocytosis at stages required for down-regulation of membrane proteins that control synapse size. Not involved in synaptic vesicle recycling. Required in R7 cells for boss endocytosis into multivesicular bodies (MVBs). Has a role in regulating adult longevity. The chain is Protein hook from Drosophila virilis (Fruit fly).